The following is a 414-amino-acid chain: MAAAPPSYCFVAFPPRAKDGLVVFGKNSARPRDEVQEVVYFSAADHEPESKVECTYISIDQVPRTYAIMISRPAWLWGAEMGANEHGVCIANEAINTREPAAEIEALLGMDLVRLGLERGETAKEALDVIVSLLEEHGQGGNYFEDANSCHSFQSAYLIVDRDEAWVLETIGKYWAAEKVTEGVRCICSQLSLTTKMDAEHPELRSYAQSQGWWTGEGEFNFSEVFSPVEDHLDCGAGKDSLEKQEESITVQTMMNTLRDKASGVCIDSEFFLTTASGVSVLPQNRSSPCIHYFTGTPDPSRSIFKPFIFVDDVKLVPKTQSPCFGDDDPAKKEPRFQEKPDRRHELYKAHEWARAIIESDQEQGRKLRSTMLELEKQGLEAMEEILTSSEPLDPAEVGDLFYDCVDTEIKFFK.

At A2 the chain carries N-acetylalanine. Residue C9 is part of the active site.

This sequence belongs to the peptidase C69 family. Secernin subfamily.

The protein resides in the cytoplasm. Its function is as follows. Regulates exocytosis in mast cells. Increases both the extent of secretion and the sensitivity of mast cells to stimulation with calcium. This is Secernin-1 (SCRN1) from Homo sapiens (Human).